We begin with the raw amino-acid sequence, 1374 residues long: Probable multidrug resistance-associated protein lethal(2)03659 (1374 aa).

Residues Met1 to Glu40 form a disordered region. A run of 6 helical transmembrane segments spans residues Leu159 to Leu179, Ala205 to Thr225, Tyr282 to Tyr302, Ile305 to Tyr325, Ile404 to Phe424, and Ile426 to Ile446. Residues Gly168–Ala449 enclose the ABC transmembrane type-1 1 domain. The disordered stretch occupies residues Glu466–Ala492. Residues Ile499–Ser722 form the ABC transporter 1 domain. Gly534–Ser541 lines the ATP pocket. The N-linked (GlcNAc...) asparagine glycan is linked to Asn561. The interval Lys723–His766 is disordered. A run of 5 helical transmembrane segments spans residues Gly787–Val807, Leu845–Ala865, Val913–Ala933, Leu938–Leu958, and Tyr1025–Phe1045. In terms of domain architecture, ABC transmembrane type-1 2 spans Phe793–Asn1079. In terms of domain architecture, ABC transporter 2 spans Phe1119 to Val1352. Position 1153–1160 (Gly1153–Ser1160) interacts with ATP. Asn1254 and Asn1353 each carry an N-linked (GlcNAc...) asparagine glycan.

This sequence belongs to the ABC transporter superfamily. ABCC family. Conjugate transporter (TC 3.A.1.208) subfamily. Uniform expression in embryos.

The protein resides in the membrane. Its function is as follows. Vital for development. This Drosophila melanogaster (Fruit fly) protein is Probable multidrug resistance-associated protein lethal(2)03659 (l(2)03659).